The following is a 122-amino-acid chain: Large ribosomal subunit protein uL18 (122 aa).

The protein belongs to the universal ribosomal protein uL18 family. Part of the 50S ribosomal subunit; part of the 5S rRNA/L5/L18/L25 subcomplex. Contacts the 5S and 23S rRNAs.

Its function is as follows. This is one of the proteins that bind and probably mediate the attachment of the 5S RNA into the large ribosomal subunit, where it forms part of the central protuberance. The polypeptide is Large ribosomal subunit protein uL18 (Prochlorococcus marinus (strain MIT 9515)).